The chain runs to 2146 residues: Phospholipid-transporting ATPase ABCA7 (2146 aa).

A helical membrane pass occupies residues 22–42 (PVQLLVELLWPLFLFFILVAV). Residues 43–549 (RHSHPPLEHH…DVFLRVLSRS (507 aa)) are Extracellular-facing. A disulfide bridge connects residues Cys75 and Cys225. An N-linked (GlcNAc...) asparagine glycan is attached at Asn312. Transmembrane regions (helical) follow at residues 550 to 570 (LPLFLTLAWIYSVTLTVKAVV), 593 to 613 (LGWFLSCLGPFLLSAALLVLV), 626 to 646 (GVVFLFLAAFAVATVTQSFLL), 655 to 675 (LAAACGGLAYFSLYLPYVLCV), 687 to 707 (VAASLLSPVAFGFGCESLALL), and 727 to 747 (VFSLAQVSGLLLLDAALYGLA). In terms of domain architecture, ABC transporter 1 spans 807–1038 (VSVRSLEKRF…LGSGYYLTLV (232 aa)). Position 841–848 (841–848 (GHNGAGKT)) interacts with ATP. A helical membrane pass occupies residues 849 to 869 (TTLSILSGLFPPSGGSAFILG). Positions 1048–1066 (EKADTDMEGSVDTRQEKKN) are enriched in basic and acidic residues. Disordered stretches follow at residues 1048-1072 (EKADTDMEGSVDTRQEKKNGSQGSR) and 1185-1209 (TALENGEPAGSAPETDQGSGPDAVG). The helical transmembrane segment at 1243-1263 (IVLPALFVGLALVFSLIVPPF) threads the bilayer. At 1264-1537 (GHYPALRLSP…ALMASSVDVL (274 aa)) the chain is on the extracellular side. Cys1345 and Cys1359 are joined by a disulfide. 6 helical membrane passes run 1538 to 1558 (VSICVVFAMSFVPASFTLVLI), 1584 to 1604 (FLWDMCNYLVPACIVVLIFLA), 1621 to 1641 (LLLLLYGWSITPLMYPASFFF), 1649 to 1669 (VVLTCINLFIGINGSMATFVL), 1683 to 1703 (ILKQVFLIFPHFCLGRGLIDM), and 1729 to 1749 (VVGKNLLAMVIQGPLFLLFTL). An ABC transporter 2 domain is found at 1793 to 2025 (LVLRNLTKVY…FAAGHTLTLR (233 aa)). An ATP-binding site is contributed by 1827–1834 (GVNGAGKT). The interval 2104-2146 (QGKDEDTEEQKEAGVGVDPAPGLQHPKRVSQFLDDPSTAETVL) is disordered.

This sequence belongs to the ABC transporter superfamily. ABCA family. Post-translationally, N-glycosylated. Expressed in leukocytes (at protein level). Widely expressed. Highly expressed in myelo-lymphatic tissues including peripheral leukocytes, thymus, spleen and bone marrow. Expressed in the hippocampus and the cerebellum. Isoform 2: Abundant in lymph node, spleen, thymus and trachea. Isoform 1: Strongly expressed in brain and bone marrow.

It localises to the cell membrane. The protein resides in the golgi apparatus membrane. It is found in the early endosome membrane. The protein localises to the cytoplasm. Its subcellular location is the cell projection. It localises to the ruffle membrane. The protein resides in the phagocytic cup. It is found in the endoplasmic reticulum. It carries out the reaction ATP + H2O + phospholipidSide 1 = ADP + phosphate + phospholipidSide 2.. It catalyses the reaction a 1,2-diacyl-sn-glycero-3-phosphocholine(out) + ATP + H2O = a 1,2-diacyl-sn-glycero-3-phosphocholine(in) + ADP + phosphate + H(+). The catalysed reaction is a 1,2-diacyl-sn-glycero-3-phospho-L-serine(out) + ATP + H2O = a 1,2-diacyl-sn-glycero-3-phospho-L-serine(in) + ADP + phosphate + H(+). ATPase activity is decreased by cholesterol and ceramide. ATPase activity is stimulated by phosphatidylserine, phosphatidylcholine and sphingomyelin, but phosphatidylserine is more effective. Catalyzes the translocation of specific phospholipids from the cytoplasmic to the extracellular/lumenal leaflet of membrane coupled to the hydrolysis of ATP. Transports preferentially phosphatidylserine over phosphatidylcholine. Plays a role in lipid homeostasis and macrophage-mediated phagocytosis. Binds APOA1 and may function in apolipoprotein-mediated phospholipid efflux from cells. May also mediate cholesterol efflux. May regulate cellular ceramide homeostasis during keratinocyte differentiation. Involved in lipid raft organization and CD1D localization on thymocytes and antigen-presenting cells, which plays an important role in natural killer T-cell development and activation. Plays a role in phagocytosis of apoptotic cells by macrophages. Macrophage phagocytosis is stimulated by APOA1 or APOA2, probably by stabilization of ABCA7. Also involved in phagocytic clearance of amyloid-beta by microglia cells and macrophages. Further limits amyloid-beta production by playing a role in the regulation of amyloid-beta A4 precursor protein (APP) endocytosis and/or processing. Amyloid-beta is the main component of amyloid plaques found in the brains of Alzheimer patients. This is Phospholipid-transporting ATPase ABCA7 from Homo sapiens (Human).